The following is a 332-amino-acid chain: Ferredoxin--NADP reductase (332 aa).

Residues T20, E39, Q47, Y52, V92, F126, D288, and T329 each contribute to the FAD site.

Belongs to the ferredoxin--NADP reductase type 2 family. Homodimer. The cofactor is FAD.

The enzyme catalyses 2 reduced [2Fe-2S]-[ferredoxin] + NADP(+) + H(+) = 2 oxidized [2Fe-2S]-[ferredoxin] + NADPH. This is Ferredoxin--NADP reductase from Geobacillus kaustophilus (strain HTA426).